The following is a 369-amino-acid chain: S-(hydroxymethyl)glutathione dehydrogenase (369 aa).

Zn(2+)-binding residues include Cys-40, His-62, Cys-92, Cys-95, Cys-98, Cys-106, and Cys-169.

The protein belongs to the zinc-containing alcohol dehydrogenase family. Class-III subfamily. As to quaternary structure, homodimer. The cofactor is Zn(2+).

The protein localises to the cytoplasm. The catalysed reaction is S-(hydroxymethyl)glutathione + NADP(+) = S-formylglutathione + NADPH + H(+). The enzyme catalyses S-(hydroxymethyl)glutathione + NAD(+) = S-formylglutathione + NADH + H(+). It catalyses the reaction a primary alcohol + NAD(+) = an aldehyde + NADH + H(+). It carries out the reaction a secondary alcohol + NAD(+) = a ketone + NADH + H(+). The catalysed reaction is S-nitrosoglutathione + NADH + H(+) = S-(hydroxysulfenamide)glutathione + NAD(+). Its function is as follows. Has high formaldehyde dehydrogenase activity in the presence of glutathione and catalyzes the oxidation of normal alcohols in a reaction that is not GSH-dependent. In addition, hemithiolacetals other than those formed from GSH, including omega-thiol fatty acids, also are substrates. Also acts as a S-nitroso-glutathione reductase by catalyzing the NADH-dependent reduction of S-nitrosoglutathione. This chain is S-(hydroxymethyl)glutathione dehydrogenase (frmA), found in Escherichia coli O6:H1 (strain CFT073 / ATCC 700928 / UPEC).